Reading from the N-terminus, the 135-residue chain is Putative pre-16S rRNA nuclease (135 aa).

Belongs to the YqgF nuclease family.

Its subcellular location is the cytoplasm. Functionally, could be a nuclease involved in processing of the 5'-end of pre-16S rRNA. This chain is Putative pre-16S rRNA nuclease, found in Thermus thermophilus (strain ATCC 27634 / DSM 579 / HB8).